A 258-amino-acid polypeptide reads, in one-letter code: MFKVRVIPCLDVKDGRVVKGVNFVNLRDAGDPVEAAIAYDAAGADELCFLDITATHENRGIMLDVVRRTAEACFMPVTVGGGVRTIDDIKTLLRSGADKVSINSAAVSRREFVKEAAEKFGEQCIVVAIDAKSVPRPGGGSRWEIFTHGGRKSTGIDAIEYAQEVVALGAGEILLTSMDRDGTRQGFDLPLTRAVADSVPVPVIASGGVGNLDHLVDGIQQGRATAVLAASIFHFGEFTIRQAKEHMVRQGLPMRLDP.

Active-site residues include D11 and D130.

The protein belongs to the HisA/HisF family. As to quaternary structure, heterodimer of HisH and HisF.

The protein resides in the cytoplasm. It catalyses the reaction 5-[(5-phospho-1-deoxy-D-ribulos-1-ylimino)methylamino]-1-(5-phospho-beta-D-ribosyl)imidazole-4-carboxamide + L-glutamine = D-erythro-1-(imidazol-4-yl)glycerol 3-phosphate + 5-amino-1-(5-phospho-beta-D-ribosyl)imidazole-4-carboxamide + L-glutamate + H(+). It participates in amino-acid biosynthesis; L-histidine biosynthesis; L-histidine from 5-phospho-alpha-D-ribose 1-diphosphate: step 5/9. IGPS catalyzes the conversion of PRFAR and glutamine to IGP, AICAR and glutamate. The HisF subunit catalyzes the cyclization activity that produces IGP and AICAR from PRFAR using the ammonia provided by the HisH subunit. The sequence is that of Imidazole glycerol phosphate synthase subunit HisF from Bradyrhizobium sp. (strain ORS 278).